Reading from the N-terminus, the 840-residue chain is Cytosolic carboxypeptidase 2 (840 aa).

The Peptidase M14 domain maps to 358–628 (YPYTYTDLQC…HVCDTLLDFC (271 aa)). Residues His-424, Glu-427, and His-520 each coordinate Zn(2+). The active-site Proton donor/acceptor is the Glu-592. Residues 706-719 (MFKKKKKKSLQTRK) are compositionally biased toward basic residues. 2 disordered regions span residues 706–726 (MFKK…EQYQ) and 758–789 (ESSS…LDPS).

This sequence belongs to the peptidase M14 family. Interacts with RARRES1, KIF11 and MAPRE1. The cofactor is Zn(2+).

The protein localises to the cytoplasm. It is found in the cytosol. The protein resides in the cytoskeleton. Its subcellular location is the microtubule organizing center. It localises to the centrosome. The protein localises to the centriole. It is found in the cilium basal body. The catalysed reaction is (L-glutamyl)(n+1)-gamma-L-glutamyl-L-glutamyl-[protein] + H2O = (L-glutamyl)(n)-gamma-L-glutamyl-L-glutamyl-[protein] + L-glutamate. With respect to regulation, inhibited by RARRES1. Functionally, metallocarboxypeptidase that mediates deglutamylation of tubulin and non-tubulin target proteins. Catalyzes the removal of polyglutamate side chains present on the gamma-carboxyl group of glutamate residues within the C-terminal tail of tubulin protein. Specifically cleaves tubulin long-side-chains, while it is not able to remove the branching point glutamate. Also catalyzes the removal of polyglutamate residues from the carboxy-terminus of non-tubulin proteins such as MYLK. This chain is Cytosolic carboxypeptidase 2 (AGBL2), found in Macaca fascicularis (Crab-eating macaque).